The following is a 163-amino-acid chain: COP9 signalosome complex subunit 9 (163 aa).

A PCI domain is found at 5–120 (EVLHAVLDPK…SVGRRIKVLR (116 aa)).

As to quaternary structure, component of a COP9 signalosome-like (CSN) complex.

It is found in the cytoplasm. It localises to the nucleus. Functionally, component of the COP9 signalosome (CSN) complex that acts as a regulator of the ubiquitin (Ubl) conjugation pathway by mediating the deneddylation of the cullin subunit of SCF-type E3 ubiquitin-protein ligase complexes. The complex is involved in the regulation of the mating pheromone response. The polypeptide is COP9 signalosome complex subunit 9 (CSN9) (Eremothecium gossypii (strain ATCC 10895 / CBS 109.51 / FGSC 9923 / NRRL Y-1056) (Yeast)).